Consider the following 291-residue polypeptide: uncharacterized protein (291 aa).

This sequence belongs to the PhyH family.

This is an uncharacterized protein from Mycobacterium bovis (strain ATCC BAA-935 / AF2122/97).